Here is a 251-residue protein sequence, read N- to C-terminus: Seminal metalloprotease 1 (251 aa).

The signal sequence occupies residues Met-1–Ser-18. The Peptidase M12A domain maps to Asn-44–Pro-248. 2 N-linked (GlcNAc...) asparagine glycosylation sites follow: Asn-55 and Asn-120. Cystine bridges form between Cys-87-Cys-247 and Cys-111-Cys-136. Zn(2+) is bound at residue His-144. The active site involves Glu-145. Zn(2+) is bound by residues His-148 and His-154. Asn-185 carries N-linked (GlcNAc...) asparagine glycosylation.

Requires Zn(2+) as cofactor. Post-translationally, undergoes cleavage in the male during mating with a cleaved product detected in the ejaculatory duct and/or bulb of males by 8-10 minutes after the start of mating. Further cleavage occurs in the mated female. May undergo cleavage in a two-step process where it is first cleaved by Sems, making it susceptible to activational cleavage which may be carried out by another protease or by autocleavage. As to expression, produced in the male accessory glands and secreted into seminal fluid. In mated females, confined to the reproductive tract and also detected in eggs laid by mated females (at protein level).

Its subcellular location is the secreted. In terms of biological role, seminal fluid metalloprotease which is transferred to females during mating and is required for processing of two other seminal fluid proteins Acp26Aa and Acp36DE in mated females. The sequence is that of Seminal metalloprotease 1 from Drosophila melanogaster (Fruit fly).